The following is a 483-amino-acid chain: GTPase Der (483 aa).

2 EngA-type G domains span residues 3–167 (FTLA…GEER) and 212–387 (LRIA…EIWN). GTP-binding positions include 9 to 16 (GRPNVGKS), 56 to 60 (DTAGL), 119 to 122 (NKAE), 218 to 225 (GRPNAGKS), 265 to 269 (DTAGM), and 330 to 333 (NKWD). Residues 388 to 472 (RRISTGRLNR…PIRLSLRTSD (85 aa)) form the KH-like domain.

The protein belongs to the TRAFAC class TrmE-Era-EngA-EngB-Septin-like GTPase superfamily. EngA (Der) GTPase family. As to quaternary structure, associates with the 50S ribosomal subunit.

Functionally, GTPase that plays an essential role in the late steps of ribosome biogenesis. The polypeptide is GTPase Der (Brucella suis (strain ATCC 23445 / NCTC 10510)).